A 307-amino-acid polypeptide reads, in one-letter code: Glutathione synthetase (307 aa).

One can recognise an ATP-grasp domain in the interval 120–304; it reads KLGALRYSHL…VSDKVIEKLL (185 aa). 146–202 lines the ATP pocket; sequence AQINHDVVVKPLGGKGGQGVIRLTKDSPGIKAMIELITSQEQLPVMMQKFIPEVKEG. Residues Glu275 and Asn277 each contribute to the Mg(2+) site.

It belongs to the prokaryotic GSH synthase family. Mg(2+) is required as a cofactor. Mn(2+) serves as cofactor.

It catalyses the reaction gamma-L-glutamyl-L-cysteine + glycine + ATP = glutathione + ADP + phosphate + H(+). Its pathway is sulfur metabolism; glutathione biosynthesis; glutathione from L-cysteine and L-glutamate: step 2/2. This is Glutathione synthetase from Prochlorococcus marinus subsp. pastoris (strain CCMP1986 / NIES-2087 / MED4).